Consider the following 210-residue polypeptide: tRNA (guanine-N(7)-)-methyltransferase (210 aa).

S-adenosyl-L-methionine-binding residues include E36, E61, D90, and D112. D112 is an active-site residue. Substrate contacts are provided by residues K116, D148, and 188–191 (TEYE).

Belongs to the class I-like SAM-binding methyltransferase superfamily. TrmB family.

The catalysed reaction is guanosine(46) in tRNA + S-adenosyl-L-methionine = N(7)-methylguanosine(46) in tRNA + S-adenosyl-L-homocysteine. The protein operates within tRNA modification; N(7)-methylguanine-tRNA biosynthesis. Its function is as follows. Catalyzes the formation of N(7)-methylguanine at position 46 (m7G46) in tRNA. The polypeptide is tRNA (guanine-N(7)-)-methyltransferase (Mycoplasma pneumoniae (strain ATCC 29342 / M129 / Subtype 1) (Mycoplasmoides pneumoniae)).